The sequence spans 459 residues: Alpha,alpha-trehalose-phosphate synthase [UDP-forming] (459 aa).

2 residues coordinate D-glucose 6-phosphate: Y86 and D140. UDP-binding residues include R262 and K267. Residues R262 and K267 each contribute to the UDP-alpha-D-glucose site. R300 contributes to the D-glucose 6-phosphate binding site. 361–369 (DGMNLVALE) provides a ligand contact to UDP-alpha-D-glucose. 365–369 (LVALE) serves as a coordination point for UDP.

It belongs to the glycosyltransferase 20 family. In terms of assembly, component of the trehalose synthase complex.

Its subcellular location is the cytoplasm. The enzyme catalyses D-glucose 6-phosphate + UDP-alpha-D-glucose = alpha,alpha-trehalose 6-phosphate + UDP + H(+). Its function is as follows. Synthase catalytic subunit of the trehalose synthase complex that catalyzes the production of trehalose from glucose-6-phosphate and UDP-alpha-D-glucose in a two step process. Can function independently of the complex. This is Alpha,alpha-trehalose-phosphate synthase [UDP-forming] (TPS1) from Encephalitozoon cuniculi (strain GB-M1) (Microsporidian parasite).